The following is a 270-amino-acid chain: 5'-AMP-activated protein kinase subunit beta-1 (270 aa).

A disordered region spans residues 1-43 (MGNTSSERAALERQAGHKTPRRDSSGGTKDGDRPKILMDSPED). The N-myristoyl glycine moiety is linked to residue G2. T4 is subject to Phosphothreonine. 2 positions are modified to phosphoserine: S5 and S6. Basic and acidic residues predominate over residues 9 to 36 (AALERQAGHKTPRRDSSGGTKDGDRPKI). Phosphothreonine is present on T19. A phosphoserine; by autocatalysis mark is found at S24 and S25. Residues S40, S96, and S101 each carry the phosphoserine modification. The tract at residues 68–163 (EVNEKAPAQA…QVKKTDFEVF (96 aa)) is glycogen-binding domain. A Phosphoserine; by autocatalysis modification is found at S108. Phosphothreonine is present on T148. Phosphoserine is present on S182. K201 carries the N6-succinyllysine modification.

The protein belongs to the 5'-AMP-activated protein kinase beta subunit family. As to quaternary structure, AMPK is a heterotrimer of an alpha catalytic subunit (PRKAA1 or PRKAA2), a beta (PRKAB1 or PRKAB2) and a gamma non-catalytic subunits (PRKAG1, PRKAG2 or PRKAG3). Interacts with FNIP1 and FNIP2. Phosphorylated when associated with the catalytic subunit (PRKAA1 or PRKAA2). Phosphorylated by ULK1; leading to negatively regulate AMPK activity and suggesting the existence of a regulatory feedback loop between ULK1 and AMPK. In terms of tissue distribution, highly expressed in kidney, heart, white adipose tissue, lung and spleen.

Functionally, non-catalytic subunit of AMP-activated protein kinase (AMPK), an energy sensor protein kinase that plays a key role in regulating cellular energy metabolism. In response to reduction of intracellular ATP levels, AMPK activates energy-producing pathways and inhibits energy-consuming processes: inhibits protein, carbohydrate and lipid biosynthesis, as well as cell growth and proliferation. AMPK acts via direct phosphorylation of metabolic enzymes, and by longer-term effects via phosphorylation of transcription regulators. Also acts as a regulator of cellular polarity by remodeling the actin cytoskeleton; probably by indirectly activating myosin. Beta non-catalytic subunit acts as a scaffold on which the AMPK complex assembles, via its C-terminus that bridges alpha (PRKAA1 or PRKAA2) and gamma subunits (PRKAG1, PRKAG2 or PRKAG3). The protein is 5'-AMP-activated protein kinase subunit beta-1 (Prkab1) of Rattus norvegicus (Rat).